A 547-amino-acid chain; its full sequence is Cdc42-interacting protein 4 (547 aa).

The segment at 1–117 (MDWGTELWDQ…EMKQERKMHF (117 aa)) is required for translocation to the plasma membrane in response to insulin, podosome formation and interaction with AKAP9 and microtubules. Positions 1 to 264 (MDWGTELWDQ…AAESVDAKND (264 aa)) constitute an F-BAR domain. A coiled-coil region spans residues 67-259 (FSQQQSFVQL…EGMKVAAESV (193 aa)). The tract at residues 293–483 (RVPSDSSLGT…YTEFDEDFEE (191 aa)) is interaction with CDC42. The interval 293–547 (RVPSDSSLGT…PTSYLRVTLN (255 aa)) is interaction with PDE6G. The tract at residues 294 to 323 (VPSDSSLGTPDGRPELRAASSRSRAKRWPF) is disordered. Phosphoserine is present on residues Ser296, Ser298, and Ser299. Residues 332–425 (TEDFSHLPPE…ESRVLSNRGD (94 aa)) are a coiled coil. The 78-residue stretch at 337–414 (HLPPEQQRKR…VQKYEAWLAE (78 aa)) folds into the REM-1 domain. Residues 415–547 (AESRVLSNRG…PTSYLRVTLN (133 aa)) form a required for interaction with FASLG and localization to lysosomes region. The segment at 420–485 (LSNRGDSLSR…EFDEDFEEPA (66 aa)) is disordered. A Phosphoserine modification is found at Ser426. The interaction with DNM2 and WASL stretch occupies residues 431 to 487 (TRPPDPPTTAPPDSSSSSNNSGSQDNKESSEEPPSEEGQDTPIYTEFDEDFEEPASP). Positions 441–451 (PPDSSSSSNNS) are enriched in low complexity. The segment at 476–547 (EFDEDFEEPA…PTSYLRVTLN (72 aa)) is interaction with DNM1 and WASL. The interval 484–547 (PASPIGQCVA…PTSYLRVTLN (64 aa)) is required for podosome formation. The 62-residue stretch at 486-547 (SPIGQCVAIY…PTSYLRVTLN (62 aa)) folds into the SH3 domain. Residues 490–547 (QCVAIYHFEGSSEGTVSMSEGEDLSLMEEDKGDGWTRVRRKQGGEGYVPTSYLRVTLN) are interaction with WAS. Positions 492–547 (VAIYHFEGSSEGTVSMSEGEDLSLMEEDKGDGWTRVRRKQGGEGYVPTSYLRVTLN) are interaction with ARHGAP17, DAAM1, DIAPH1 and DIAPH2.

This sequence belongs to the FNBP1 family. As to quaternary structure, homodimerizes, the dimers can polymerize end-to-end to form filamentous structures. Interacts specifically with GTP-bound CDC42 and RHOQ. Interacts with AKAP9, ARHGAP17, DAAM1, DIAPH1, DIAPH2, DNM1, DNM2, FASLG/FASL, GAPVD1, LYN, microtubules, SRC, WAS/WASP and WASL/N-WASP. Interacts with the ligand binding domain of the thyroid receptor (TR) in the presence of thyroid hormone. May interact with CTNNB1 and HD/HTT. Interacts with PDE6G. In terms of tissue distribution, expressed in adrenal gland, aorta, brain, heart, kidney, liver, skeletal muscle and spleen.

Its subcellular location is the cytoplasm. It localises to the cytoskeleton. The protein resides in the cell cortex. The protein localises to the lysosome. It is found in the golgi apparatus. Its subcellular location is the cell membrane. It localises to the cell projection. The protein resides in the phagocytic cup. Functionally, required to coordinate membrane tubulation with reorganization of the actin cytoskeleton during endocytosis. Also acts as a link between CDC42 signaling and regulation of the actin cytoskeleton. Binds to lipids such as phosphatidylinositol 4,5-bisphosphate and phosphatidylserine and promotes membrane invagination and the formation of tubules. Also enhances actin polymerization in the vicinity of membrane tubules by recruiting WASL/N-WASP which in turn activates the Arp2/3 complex. Actin polymerization and dynamin may promote the fission of membrane tubules to form endocytic vesicles. Required for the formation of podosomes, actin-rich adhesion structures specific to monocyte-derived cells. Required for translocation of GLUT4 to the plasma membrane in response to insulin signaling. May be required for the lysosomal retention of FASLG/FASL. The protein is Cdc42-interacting protein 4 (Trip10) of Rattus norvegicus (Rat).